We begin with the raw amino-acid sequence, 358 residues long: Methylthioribose-1-phosphate isomerase (358 aa).

Met1 is modified (N-acetylmethionine). The active-site Proton donor is the Asp248.

This sequence belongs to the eIF-2B alpha/beta/delta subunits family. MtnA subfamily.

The protein resides in the cytoplasm. It is found in the nucleus. The catalysed reaction is 5-(methylsulfanyl)-alpha-D-ribose 1-phosphate = 5-(methylsulfanyl)-D-ribulose 1-phosphate. It participates in amino-acid biosynthesis; L-methionine biosynthesis via salvage pathway; L-methionine from S-methyl-5-thio-alpha-D-ribose 1-phosphate: step 1/6. Catalyzes the interconversion of methylthioribose-1-phosphate (MTR-1-P) into methylthioribulose-1-phosphate (MTRu-1-P). The chain is Methylthioribose-1-phosphate isomerase from Bos taurus (Bovine).